A 102-amino-acid polypeptide reads, in one-letter code: Urease subunit beta (102 aa).

Belongs to the urease beta subunit family. In terms of assembly, heterotrimer of UreA (gamma), UreB (beta) and UreC (alpha) subunits. Three heterotrimers associate to form the active enzyme.

It localises to the cytoplasm. The enzyme catalyses urea + 2 H2O + H(+) = hydrogencarbonate + 2 NH4(+). The protein operates within nitrogen metabolism; urea degradation; CO(2) and NH(3) from urea (urease route): step 1/1. This Opitutus terrae (strain DSM 11246 / JCM 15787 / PB90-1) protein is Urease subunit beta.